A 78-amino-acid polypeptide reads, in one-letter code: Defensin-like protein 201 (78 aa).

A signal peptide spans 1 to 22 (MRNLINFAVLIMTIFIVSASGA). 4 cysteine pairs are disulfide-bonded: cysteine 32/cysteine 78, cysteine 41/cysteine 61, cysteine 46/cysteine 71, and cysteine 50/cysteine 73.

It belongs to the DEFL family.

The protein localises to the secreted. The protein is Defensin-like protein 201 of Arabidopsis thaliana (Mouse-ear cress).